Reading from the N-terminus, the 172-residue chain is Crossover junction endodeoxyribonuclease RuvC (172 aa).

Residues aspartate 11, glutamate 70, and aspartate 142 contribute to the active site. Residues aspartate 11, glutamate 70, and aspartate 142 each coordinate Mg(2+).

The protein belongs to the RuvC family. In terms of assembly, homodimer which binds Holliday junction (HJ) DNA. The HJ becomes 2-fold symmetrical on binding to RuvC with unstacked arms; it has a different conformation from HJ DNA in complex with RuvA. In the full resolvosome a probable DNA-RuvA(4)-RuvB(12)-RuvC(2) complex forms which resolves the HJ. Requires Mg(2+) as cofactor.

It localises to the cytoplasm. It carries out the reaction Endonucleolytic cleavage at a junction such as a reciprocal single-stranded crossover between two homologous DNA duplexes (Holliday junction).. In terms of biological role, the RuvA-RuvB-RuvC complex processes Holliday junction (HJ) DNA during genetic recombination and DNA repair. Endonuclease that resolves HJ intermediates. Cleaves cruciform DNA by making single-stranded nicks across the HJ at symmetrical positions within the homologous arms, yielding a 5'-phosphate and a 3'-hydroxyl group; requires a central core of homology in the junction. The consensus cleavage sequence is 5'-(A/T)TT(C/G)-3'. Cleavage occurs on the 3'-side of the TT dinucleotide at the point of strand exchange. HJ branch migration catalyzed by RuvA-RuvB allows RuvC to scan DNA until it finds its consensus sequence, where it cleaves and resolves the cruciform DNA. The polypeptide is Crossover junction endodeoxyribonuclease RuvC (Hydrogenovibrio crunogenus (strain DSM 25203 / XCL-2) (Thiomicrospira crunogena)).